The chain runs to 747 residues: AT-rich interactive domain-containing protein 4 (747 aa).

Residues Pro-454–Pro-475 are disordered. Over residues Lys-459–Glu-471 the composition is skewed to basic and acidic residues. Residues Val-566–Asp-670 form the ARID domain. The PHD-type zinc-finger motif lies at Gly-674–Ser-730.

The protein localises to the nucleus. This is AT-rich interactive domain-containing protein 4 (ARID4) from Arabidopsis thaliana (Mouse-ear cress).